Consider the following 1962-residue polypeptide: RNA replication polyprotein (1962 aa).

The region spanning 64–261 is the Alphavirus-like MT domain; that stretch reads YPNGYLPHSH…YEQKLNMEWL (198 aa). In terms of domain architecture, OTU spans 683 to 794; that stretch reads GDEIPTPSDG…GNHFVGIETY (112 aa). The Fe2OG dioxygenase domain occupies 874-963; sequence DFNCALINFY…RVSITFRKHV (90 aa). Histidine 892, aspartate 894, and histidine 946 together coordinate Fe cation. Arginine 954 lines the 2-oxoglutarate pocket. The region spanning 978–1067 is the Peptidase C23 domain; the sequence is YKNTCLINAF…LRNNHFSVIN (90 aa). Catalysis depends on residues cysteine 982 and histidine 1062. The 176-residue stretch at 1122–1297 folds into the (+)RNA virus helicase ATP-binding domain; it reads NSFLNMTTGI…LIGGQNIEYI (176 aa). 1164–1171 lines the ATP pocket; it reads GFAGSGKS. The 148-residue stretch at 1298–1445 folds into the (+)RNA virus helicase C-terminal domain; it reads YSTHRMSRYF…GEKITFNRLN (148 aa). Residues 1739–1846 form the RdRp catalytic domain; sequence DICVESDYEA…LNNLAVCHDF (108 aa).

The cofactor is Fe(2+). Post-translationally, specific enzymatic cleavages by the viral protease yield mature proteins.

It carries out the reaction RNA(n) + a ribonucleoside 5'-triphosphate = RNA(n+1) + diphosphate. It catalyses the reaction ATP + H2O = ADP + phosphate + H(+). Functionally, RNA replication polyprotein: RNA-directed RNA polymerase involved in viral RNA replication. Its function is as follows. Protease: Thiol protease that cleaves the polyprotein. The polypeptide is RNA replication polyprotein (Citrus (CLBV)).